A 311-amino-acid polypeptide reads, in one-letter code: Large ribosomal subunit protein uL22 (311 aa).

It belongs to the universal ribosomal protein uL22 family. As to quaternary structure, part of the 50S ribosomal subunit.

In terms of biological role, this protein binds specifically to 23S rRNA; its binding is stimulated by other ribosomal proteins, e.g. L4, L17, and L20. It is important during the early stages of 50S assembly. It makes multiple contacts with different domains of the 23S rRNA in the assembled 50S subunit and ribosome. The globular domain of the protein is located near the polypeptide exit tunnel on the outside of the subunit, while an extended beta-hairpin is found that lines the wall of the exit tunnel in the center of the 70S ribosome. This is Large ribosomal subunit protein uL22 (rplV) from Ureaplasma parvum serovar 3 (strain ATCC 27815 / 27 / NCTC 11736).